Here is a 1207-residue protein sequence, read N- to C-terminus: DNA-directed RNA polymerase subunit beta' (1207 aa).

Zn(2+)-binding residues include C60, C62, C75, and C78. Mg(2+) is bound by residues D450, D452, and D454. Zn(2+)-binding residues include C819, C893, C900, and C903.

Belongs to the RNA polymerase beta' chain family. In terms of assembly, the RNAP catalytic core consists of 2 alpha, 1 beta, 1 beta' and 1 omega subunit. When a sigma factor is associated with the core the holoenzyme is formed, which can initiate transcription. The cofactor is Mg(2+). Zn(2+) serves as cofactor.

It catalyses the reaction RNA(n) + a ribonucleoside 5'-triphosphate = RNA(n+1) + diphosphate. DNA-dependent RNA polymerase catalyzes the transcription of DNA into RNA using the four ribonucleoside triphosphates as substrates. The protein is DNA-directed RNA polymerase subunit beta' of Streptococcus pyogenes serotype M3 (strain ATCC BAA-595 / MGAS315).